A 569-amino-acid polypeptide reads, in one-letter code: AsmA family protein YicH (569 aa).

Residues 1–6 (MKFIGK) are Cytoplasmic-facing. Residues 7 to 27 (LLLYILIALLVAIAGLYFLLQ) form a helical membrane-spanning segment. Residues 28-569 (TRWGAEHISA…GEVTSTEPVR (542 aa)) are Periplasmic-facing.

The protein belongs to the AsmA family.

It is found in the cell inner membrane. The polypeptide is AsmA family protein YicH (yicH) (Escherichia coli (strain K12)).